A 507-amino-acid chain; its full sequence is ATP synthase subunit alpha, chloroplastic (507 aa).

Position 170–177 (170–177 (GDRQTGKT)) interacts with ATP.

This sequence belongs to the ATPase alpha/beta chains family. F-type ATPases have 2 components, CF(1) - the catalytic core - and CF(0) - the membrane proton channel. CF(1) has five subunits: alpha(3), beta(3), gamma(1), delta(1), epsilon(1). CF(0) has four main subunits: a, b, b' and c.

It is found in the plastid. The protein resides in the chloroplast thylakoid membrane. The enzyme catalyses ATP + H2O + 4 H(+)(in) = ADP + phosphate + 5 H(+)(out). In terms of biological role, produces ATP from ADP in the presence of a proton gradient across the membrane. The alpha chain is a regulatory subunit. The polypeptide is ATP synthase subunit alpha, chloroplastic (Ranunculus macranthus (Large buttercup)).